The sequence spans 419 residues: UDP-N-acetylglucosamine 1-carboxyvinyltransferase (419 aa).

22–23 contributes to the phosphoenolpyruvate binding site; it reads KN. Residue R92 participates in UDP-N-acetyl-alpha-D-glucosamine binding. The active-site Proton donor is C116. C116 carries the 2-(S-cysteinyl)pyruvic acid O-phosphothioketal modification. UDP-N-acetyl-alpha-D-glucosamine is bound by residues 121–125, D306, and I328; that span reads RPIDL.

This sequence belongs to the EPSP synthase family. MurA subfamily.

Its subcellular location is the cytoplasm. The catalysed reaction is phosphoenolpyruvate + UDP-N-acetyl-alpha-D-glucosamine = UDP-N-acetyl-3-O-(1-carboxyvinyl)-alpha-D-glucosamine + phosphate. The protein operates within cell wall biogenesis; peptidoglycan biosynthesis. Its function is as follows. Cell wall formation. Adds enolpyruvyl to UDP-N-acetylglucosamine. Target for the antibiotic fosfomycin. Involved in heteroresistance to antibiotic fosfomycin. Heteroresistance is the ability of a clonal population to grow one or several subpopulations at a frequency of 10(-7) to 10(-3) in the presence of a higher antibiotic concentration than that predicted to be effective by measurement of the minimum inhibitory concentration (MIC). The protein is UDP-N-acetylglucosamine 1-carboxyvinyltransferase of Streptococcus pneumoniae serotype 2 (strain D39 / NCTC 7466).